The chain runs to 120 residues: Large ribosomal subunit protein eL18 (120 aa).

Belongs to the eukaryotic ribosomal protein eL18 family.

This Pyrococcus horikoshii (strain ATCC 700860 / DSM 12428 / JCM 9974 / NBRC 100139 / OT-3) protein is Large ribosomal subunit protein eL18.